We begin with the raw amino-acid sequence, 382 residues long: Serine protease 23 (382 aa).

Positions 1 to 22 are cleaved as a signal peptide; the sequence is MAGIPGLFILLVLLCVFMQVSP. Residue asparagine 92 is glycosylated (N-linked (GlcNAc...) asparagine). Cysteine 159 and cysteine 175 form a disulfide bridge. Histidine 174 serves as the catalytic Charge relay system. Asparagine 206 carries N-linked (GlcNAc...) asparagine glycosylation. Catalysis depends on charge relay system residues aspartate 239 and serine 315.

This sequence belongs to the peptidase S1 family.

It localises to the secreted. In Mus musculus (Mouse), this protein is Serine protease 23 (Prss23).